Reading from the N-terminus, the 295-residue chain is N-acetylmuramic acid 6-phosphate etherase (295 aa).

An SIS domain is found at 55 to 218; sequence AADALKQGGR…STGAMVKLGK (164 aa). The active-site Proton donor is glutamate 83. Glutamate 114 is an active-site residue.

It belongs to the GCKR-like family. MurNAc-6-P etherase subfamily. In terms of assembly, homodimer.

It catalyses the reaction N-acetyl-D-muramate 6-phosphate + H2O = N-acetyl-D-glucosamine 6-phosphate + (R)-lactate. It participates in amino-sugar metabolism; 1,6-anhydro-N-acetylmuramate degradation. It functions in the pathway amino-sugar metabolism; N-acetylmuramate degradation. The protein operates within cell wall biogenesis; peptidoglycan recycling. Functionally, specifically catalyzes the cleavage of the D-lactyl ether substituent of MurNAc 6-phosphate, producing GlcNAc 6-phosphate and D-lactate. Together with AnmK, is also required for the utilization of anhydro-N-acetylmuramic acid (anhMurNAc) either imported from the medium or derived from its own cell wall murein, and thus plays a role in cell wall recycling. This chain is N-acetylmuramic acid 6-phosphate etherase, found in Yersinia pseudotuberculosis serotype O:1b (strain IP 31758).